The chain runs to 302 residues: Uricase (302 aa).

Serine 2 is modified (N-acetylserine). Residues lysine 11 and threonine 58 each act as charge relay system in the active site. 5-hydroxyisourate-binding residues include threonine 58, aspartate 59, phenylalanine 160, arginine 177, valine 228, glutamine 229, and asparagine 255. Threonine 58 serves as a coordination point for O2. Residues threonine 58, aspartate 59, phenylalanine 160, arginine 177, valine 228, glutamine 229, and asparagine 255 each coordinate urate. Residue asparagine 255 participates in O2 binding. The Charge relay system role is filled by histidine 257. A Microbody targeting signal motif is present at residues 300–302 (SKL).

The protein belongs to the uricase family. As to quaternary structure, homotetramer.

The protein resides in the peroxisome. It carries out the reaction urate + O2 + H2O = 5-hydroxyisourate + H2O2. Its pathway is purine metabolism; urate degradation; (S)-allantoin from urate: step 1/3. With respect to regulation, 8-Azaxanthine is one of the most potent competitive inhibitors of uricase activity. Hypoxanthine has only a small inhibitor effect, and caffeine has no effect at all. Azide not only competes with dioxygen but also competes with the substrate for its enzymatic site. Its function is as follows. Urate oxidase is a cofactorless enzyme involved in the metabolism of purines. Catalyzes, in the presence of molecular oxygen, the hydroxylation of uric acid to metastable 5-hydroxyisourate (5-HIU) which is further degraded to allantoin. The protein is Uricase of Aspergillus flavus.